Reading from the N-terminus, the 671-residue chain is DNA ligase (671 aa).

NAD(+)-binding positions include 38 to 42 (DKEFD), 87 to 88 (SL), and Glu113. Residue Lys115 is the N6-AMP-lysine intermediate of the active site. Arg136, Glu170, Lys282, and Lys306 together coordinate NAD(+). 4 residues coordinate Zn(2+): Cys396, Cys399, Cys414, and Cys419. The region spanning 586 to 671 (SDLQPFVGQS…LLKQEGIAID (86 aa)) is the BRCT domain.

Belongs to the NAD-dependent DNA ligase family. LigA subfamily. It depends on Mg(2+) as a cofactor. Mn(2+) serves as cofactor.

The enzyme catalyses NAD(+) + (deoxyribonucleotide)n-3'-hydroxyl + 5'-phospho-(deoxyribonucleotide)m = (deoxyribonucleotide)n+m + AMP + beta-nicotinamide D-nucleotide.. Its function is as follows. DNA ligase that catalyzes the formation of phosphodiester linkages between 5'-phosphoryl and 3'-hydroxyl groups in double-stranded DNA using NAD as a coenzyme and as the energy source for the reaction. It is essential for DNA replication and repair of damaged DNA. The chain is DNA ligase from Leptospira biflexa serovar Patoc (strain Patoc 1 / Ames).